Reading from the N-terminus, the 139-residue chain is Actin-depolymerizing factor 7 (139 aa).

Residues 7–139 (GMAVDDECKL…GLDVIRGRAN (133 aa)) form the ADF-H domain.

This sequence belongs to the actin-binding proteins ADF family.

Functionally, actin-depolymerizing protein. Severs actin filaments (F-actin) and binds to actin monomers. The sequence is that of Actin-depolymerizing factor 7 (ADF7) from Oryza sativa subsp. japonica (Rice).